A 639-amino-acid polypeptide reads, in one-letter code: Splicing factor 1 (639 aa).

2 disordered regions span residues 1–42 (MATG…VIPP) and 65–94 (LRTGDLGIPPNPEDRSPSPEPIYNSEGKRL). A2 is modified (N-acetylalanine). S14 is modified (phosphoserine). Positions 15–19 (KKRKR) match the Nuclear localization signal motif. S20 is modified (phosphoserine; by PKG). 2 positions are modified to phosphoserine: S80 and S82. Y87 is subject to Phosphotyrosine. Position 89 is a phosphoserine (S89). One can recognise a KH domain in the interval 141–222 (MIPQDEYPEI…ENVKKAVEQI (82 aa)). A CCHC-type zinc finger spans residues 277–296 (TVCTKCGGAGHIASDCKFQR). The segment at 325-639 (VPASVGSTSG…PAPPPPPPQN (315 aa)) is disordered. Residues 335 to 350 (PATTPLASAPRPAAPA) are compositionally biased toward low complexity. Over residues 382–394 (MHGGGPGGPGGGP) the composition is skewed to gly residues. The segment covering 418–447 (NGPPPPWMQPPPPPMNQGPHPPGHHGPPPM) has biased composition (pro residues). L463 is subject to Phosphoserine. Omega-N-methylarginine is present on K467. The span at 470 to 499 (MPPPPMGMMPPPPPPPSGQPPPPPSGPLPP) shows a compositional bias: pro residues. Composition is skewed to low complexity over residues 515-534 (SSMASSTPLPWQQNTTTTTT) and 542-566 (PPWQQQQAAAAASPGAPQMQGNPTM). Pro residues-rich tracts occupy residues 567 to 591 (VPLPPGVQPPLPPGAPPPPPPPPPG) and 598 to 608 (APPPPPPPPMD). The segment covering 615-625 (MMGMGVAGMPP) has biased composition (low complexity). The segment covering 626–639 (FGMPPAPPPPPPQN) has biased composition (pro residues).

Belongs to the BBP/SF1 family. Binds U2AF2. Interacts with U1 snRNA. Binds EWSR1, FUS and TAF15. Interacts with RBM17. Post-translationally, phosphorylation on Ser-20 interferes with U2AF2 binding and spliceosome assembly. Isoform 6 is phosphorylated on Ser-463. In terms of tissue distribution, detected in lung, ovary, adrenal gland, colon, kidney, muscle, pancreas, thyroid, placenta, brain, liver and heart.

The protein localises to the nucleus. Its function is as follows. Necessary for the ATP-dependent first step of spliceosome assembly. Binds to the intron branch point sequence (BPS) 5'-UACUAAC-3' of the pre-mRNA. May act as transcription repressor. This chain is Splicing factor 1 (SF1), found in Homo sapiens (Human).